Consider the following 78-residue polypeptide: Translational regulator CsrA (78 aa).

Belongs to the CsrA/RsmA family. Homodimer; the beta-strands of each monomer intercalate to form a hydrophobic core, while the alpha-helices form wings that extend away from the core.

The protein localises to the cytoplasm. A translational regulator that binds mRNA to regulate translation initiation and/or mRNA stability. Usually binds in the 5'-UTR at or near the Shine-Dalgarno sequence preventing ribosome-binding, thus repressing translation. Its main target seems to be the major flagellin gene, while its function is anatagonized by FliW. The protein is Translational regulator CsrA of Borrelia recurrentis (strain A1).